The following is a 532-amino-acid chain: Phosphoenolpyruvate carboxykinase (ATP) (532 aa).

Arginine 60, tyrosine 194, and lysine 200 together coordinate substrate. Residues lysine 200, histidine 219, and 237–245 (GLSGTGKTT) contribute to the ATP site. Mn(2+) is bound by residues lysine 200 and histidine 219. Aspartate 258 is a Mn(2+) binding site. Residues glutamate 286, arginine 324, and threonine 449 each coordinate ATP. Substrate is bound at residue arginine 324.

This sequence belongs to the phosphoenolpyruvate carboxykinase (ATP) family. Mn(2+) serves as cofactor.

It is found in the cytoplasm. The catalysed reaction is oxaloacetate + ATP = phosphoenolpyruvate + ADP + CO2. It participates in carbohydrate biosynthesis; gluconeogenesis. Involved in the gluconeogenesis. Catalyzes the conversion of oxaloacetate (OAA) to phosphoenolpyruvate (PEP) through direct phosphoryl transfer between the nucleoside triphosphate and OAA. This Cereibacter sphaeroides (strain ATCC 17029 / ATH 2.4.9) (Rhodobacter sphaeroides) protein is Phosphoenolpyruvate carboxykinase (ATP).